The primary structure comprises 452 residues: uncharacterized protein (452 aa).

Belongs to the HypE family.

This is an uncharacterized protein from Methanocaldococcus jannaschii (strain ATCC 43067 / DSM 2661 / JAL-1 / JCM 10045 / NBRC 100440) (Methanococcus jannaschii).